The chain runs to 341 residues: RNA 3'-terminal phosphate cyclase (341 aa).

ATP-binding positions include Q100 and 283–287; that span reads FLGDQ. The active-site Tele-AMP-histidine intermediate is H307.

Belongs to the RNA 3'-terminal cyclase family. Type 1 subfamily.

The protein resides in the cytoplasm. The enzyme catalyses a 3'-end 3'-phospho-ribonucleotide-RNA + ATP = a 3'-end 2',3'-cyclophospho-ribonucleotide-RNA + AMP + diphosphate. Catalyzes the conversion of 3'-phosphate to a 2',3'-cyclic phosphodiester at the end of RNA. The mechanism of action of the enzyme occurs in 3 steps: (A) adenylation of the enzyme by ATP; (B) transfer of adenylate to an RNA-N3'P to produce RNA-N3'PP5'A; (C) and attack of the adjacent 2'-hydroxyl on the 3'-phosphorus in the diester linkage to produce the cyclic end product. The biological role of this enzyme is unknown but it is likely to function in some aspects of cellular RNA processing. In Pyrococcus horikoshii (strain ATCC 700860 / DSM 12428 / JCM 9974 / NBRC 100139 / OT-3), this protein is RNA 3'-terminal phosphate cyclase (rtcA).